We begin with the raw amino-acid sequence, 534 residues long: Bifunctional purine biosynthesis protein PurH (534 aa).

Positions 6 to 151 constitute an MGS-like domain; it reads TRLPVRRALI…KNHKDVAIVV (146 aa).

The protein belongs to the PurH family.

The enzyme catalyses (6R)-10-formyltetrahydrofolate + 5-amino-1-(5-phospho-beta-D-ribosyl)imidazole-4-carboxamide = 5-formamido-1-(5-phospho-D-ribosyl)imidazole-4-carboxamide + (6S)-5,6,7,8-tetrahydrofolate. It catalyses the reaction IMP + H2O = 5-formamido-1-(5-phospho-D-ribosyl)imidazole-4-carboxamide. It participates in purine metabolism; IMP biosynthesis via de novo pathway; 5-formamido-1-(5-phospho-D-ribosyl)imidazole-4-carboxamide from 5-amino-1-(5-phospho-D-ribosyl)imidazole-4-carboxamide (10-formyl THF route): step 1/1. It functions in the pathway purine metabolism; IMP biosynthesis via de novo pathway; IMP from 5-formamido-1-(5-phospho-D-ribosyl)imidazole-4-carboxamide: step 1/1. The polypeptide is Bifunctional purine biosynthesis protein PurH (Stutzerimonas stutzeri (strain A1501) (Pseudomonas stutzeri)).